A 202-amino-acid chain; its full sequence is Cytochrome c biogenesis ATP-binding export protein CcmA (202 aa).

The region spanning 3 to 200 (LAAENLSGER…EGTQELKMGA (198 aa)) is the ABC transporter domain. 35–42 (GPNGAGKS) lines the ATP pocket.

This sequence belongs to the ABC transporter superfamily. CcmA exporter (TC 3.A.1.107) family. In terms of assembly, the complex is composed of two ATP-binding proteins (CcmA) and two transmembrane proteins (CcmB).

The protein localises to the cell inner membrane. The enzyme catalyses heme b(in) + ATP + H2O = heme b(out) + ADP + phosphate + H(+). Part of the ABC transporter complex CcmAB involved in the biogenesis of c-type cytochromes; once thought to export heme, this seems not to be the case, but its exact role is uncertain. Responsible for energy coupling to the transport system. This Chelativorans sp. (strain BNC1) protein is Cytochrome c biogenesis ATP-binding export protein CcmA.